A 108-amino-acid chain; its full sequence is AMTDILSAKDIEAALTSCQAADSFNYKSFFSKVGLKGKSTDQVKKIFGILDQDKSGFIEEDELQLFLQNFSSTARALTAAETKAFMAAGDTDGDGKIGVDEFQALVKA.

EF-hand domains follow at residues 38–73 (KSTD…FSST) and 77–108 (LTAA…LVKA). Residues aspartate 51, aspartate 53, serine 55, phenylalanine 57, glutamate 59, glutamate 62, aspartate 90, aspartate 92, aspartate 94, lysine 96, and glutamate 101 each contribute to the Ca(2+) site.

It belongs to the parvalbumin family.

Functionally, in muscle, parvalbumin is thought to be involved in relaxation after contraction. It binds two calcium ions. The sequence is that of Parvalbumin beta from Graptemys geographica (Common map turtle).